Consider the following 300-residue polypeptide: 3-hydroxy-3-isohexenylglutaryl-CoA/hydroxy-methylglutaryl-CoA lyase (300 aa).

Residues 7–274 (VRLVEVGPRD…HTGVDMHALV (268 aa)) enclose the Pyruvate carboxyltransferase domain. Residue Arg-15 coordinates substrate. 3 residues coordinate a divalent metal cation: Asp-16, His-207, and His-209. Cys-240 is an active-site residue. Residue Asn-249 coordinates a divalent metal cation.

It belongs to the HMG-CoA lyase family. In terms of assembly, homodimer. The cofactor is Mg(2+). Requires Mn(2+) as cofactor.

It carries out the reaction 3-hydroxy-3-(4-methylpent-3-en-1-yl)glutaryl-CoA = 7-methyl-3-oxooct-6-enoyl-CoA + acetate. The enzyme catalyses (3S)-3-hydroxy-3-methylglutaryl-CoA = acetoacetate + acetyl-CoA. Its pathway is metabolic intermediate metabolism; (S)-3-hydroxy-3-methylglutaryl-CoA degradation; acetoacetate from (S)-3-hydroxy-3-methylglutaryl-CoA: step 1/1. Involved in the L-leucine, isovalerate and acyclic monoterpene catabolism. Catalyzes the cleavage of 3-hydroxy-3-methylglutaryl-CoA (HMG-CoA) to yield acetyl-CoA and acetoacetate. It can also catalyze the cleavage of 3-hydroxy-3-isohexenylglutaryl-CoA (HIHG_CoA) to yield 7-methyl-3-oxooct-6-enoyl-CoA and acetate. The protein is 3-hydroxy-3-isohexenylglutaryl-CoA/hydroxy-methylglutaryl-CoA lyase of Pseudomonas aeruginosa (strain ATCC 15692 / DSM 22644 / CIP 104116 / JCM 14847 / LMG 12228 / 1C / PRS 101 / PAO1).